The following is a 783-amino-acid chain: Probable alpha,alpha-trehalose-phosphate synthase [UDP-forming] 3 (783 aa).

The segment at 11-456 (QTLLVVANRL…GFDFLSELND (446 aa)) is glycosyltransferase.

The protein in the N-terminal section; belongs to the glycosyltransferase 20 family. In the C-terminal section; belongs to the trehalose phosphatase family.

The catalysed reaction is D-glucose 6-phosphate + UDP-alpha-D-glucose = alpha,alpha-trehalose 6-phosphate + UDP + H(+). This is Probable alpha,alpha-trehalose-phosphate synthase [UDP-forming] 3 (TPS3) from Arabidopsis thaliana (Mouse-ear cress).